The primary structure comprises 281 residues: NH(3)-dependent NAD(+) synthetase (281 aa).

24–31 contributes to the ATP binding site; sequence GVSGGVDS. D30 contacts Mg(2+). R145 lines the deamido-NAD(+) pocket. An ATP-binding site is contributed by T165. E170 contacts Mg(2+). Deamido-NAD(+) contacts are provided by K178 and D185. ATP is bound by residues K194 and S216.

This sequence belongs to the NAD synthetase family. In terms of assembly, homodimer.

It catalyses the reaction deamido-NAD(+) + NH4(+) + ATP = AMP + diphosphate + NAD(+) + H(+). The protein operates within cofactor biosynthesis; NAD(+) biosynthesis; NAD(+) from deamido-NAD(+) (ammonia route): step 1/1. Functionally, catalyzes the ATP-dependent amidation of deamido-NAD to form NAD. Uses ammonia as a nitrogen source. In Thermotoga maritima (strain ATCC 43589 / DSM 3109 / JCM 10099 / NBRC 100826 / MSB8), this protein is NH(3)-dependent NAD(+) synthetase (nadE1).